Here is a 372-residue protein sequence, read N- to C-terminus: tRNA-specific 2-thiouridylase MnmA (372 aa).

ATP is bound by residues 9 to 16 (GMSGGVDS) and Met35. The tract at residues 95–97 (NPD) is interaction with target base in tRNA. The active-site Nucleophile is the Cys100. A disulfide bond links Cys100 and Cys201. Residue Gly124 coordinates ATP. An interaction with tRNA region spans residues 151-153 (KDQ). Cys201 serves as the catalytic Cysteine persulfide intermediate. The tract at residues 317–318 (RY) is interaction with tRNA.

It belongs to the MnmA/TRMU family.

The protein resides in the cytoplasm. The enzyme catalyses S-sulfanyl-L-cysteinyl-[protein] + uridine(34) in tRNA + AH2 + ATP = 2-thiouridine(34) in tRNA + L-cysteinyl-[protein] + A + AMP + diphosphate + H(+). Catalyzes the 2-thiolation of uridine at the wobble position (U34) of tRNA, leading to the formation of s(2)U34. The polypeptide is tRNA-specific 2-thiouridylase MnmA (Herminiimonas arsenicoxydans).